Reading from the N-terminus, the 460-residue chain is Receptor-like cytosolic serine/threonine-protein kinase RBK2 (460 aa).

Positions 1-67 (MNSASAHDLR…DADTDVQCKN (67 aa)) are disordered. The segment covering 7-23 (HDLRLLEVDKEKQDPKS) has biased composition (basic and acidic residues). The Protein kinase domain occupies 143-415 (FSPENIIGRG…VELLLGHEDV (273 aa)). ATP is bound by residues 149 to 157 (IGRGGYADV) and Lys171. Asp267 acts as the Proton acceptor in catalysis. Thr307 bears the Phosphothreonine mark. Phosphotyrosine is present on Tyr315.

It belongs to the protein kinase superfamily. Ser/Thr protein kinase family. As to quaternary structure, interacts with ARAC5 and ARAC10.

It localises to the cytoplasm. It catalyses the reaction L-seryl-[protein] + ATP = O-phospho-L-seryl-[protein] + ADP + H(+). The catalysed reaction is L-threonyl-[protein] + ATP = O-phospho-L-threonyl-[protein] + ADP + H(+). In Arabidopsis thaliana (Mouse-ear cress), this protein is Receptor-like cytosolic serine/threonine-protein kinase RBK2 (RBK2).